The sequence spans 116 residues: Protein Rev (116 aa).

Ser-5 carries the post-translational modification Phosphoserine; by host CK2. The homomultimerization stretch occupies residues 18–26; the sequence is IIKILYQSN. A disordered region spans residues 26-48; sequence NPYSKPNGSRQARRNRRRRWRAR. Positions 34-50 match the Nuclear localization signal and RNA-binding (RRE) motif; sequence SRQARRNRRRRWRARQN. Residues 36–47 show a composition bias toward basic residues; the sequence is QARRNRRRRWRA. The Nuclear export signal and binding to XPO1 signature appears at 73-84; the sequence is LQLPPIERLRLD. Residue Ser-92 is modified to Phosphoserine; by host.

The protein belongs to the HIV-1 REV protein family. As to quaternary structure, homomultimer; when bound to the RRE. Multimeric assembly is essential for activity and may involve XPO1. Binds to human KPNB1, XPO1, TNPO1, RANBP5 and IPO7. Interacts with the viral Integrase. Interacts with human KHDRBS1. Interacts with human NAP1; this interaction decreases Rev multimerization and stimulates its activity. Interacts with human DEAD-box helicases DDX3 and DDX24; these interactions may serve for viral RNA export to the cytoplasm and packaging, respectively. Interacts with human PSIP1; this interaction may inhibit HIV-1 DNA integration by promoting dissociation of the Integrase-LEDGF/p75 complex. Asymmetrically arginine dimethylated at one site by host PRMT6. Methylation impairs the RNA-binding activity and export of viral RNA from the nucleus to the cytoplasm. In terms of processing, phosphorylated by protein kinase CK2. Presence of, and maybe binding to the N-terminus of the regulatory beta subunit of CK2 is necessary for CK2-mediated Rev's phosphorylation.

Its subcellular location is the host nucleus. It localises to the host nucleolus. It is found in the host cytoplasm. In terms of biological role, escorts unspliced or incompletely spliced viral pre-mRNAs (late transcripts) out of the nucleus of infected cells. These pre-mRNAs carry a recognition sequence called Rev responsive element (RRE) located in the env gene, that is not present in fully spliced viral mRNAs (early transcripts). This function is essential since most viral proteins are translated from unspliced or partially spliced pre-mRNAs which cannot exit the nucleus by the pathway used by fully processed cellular mRNAs. Rev itself is translated from a fully spliced mRNA that readily exits the nucleus. Rev's nuclear localization signal (NLS) binds directly to KPNB1/Importin beta-1 without previous binding to KPNA1/Importin alpha-1. KPNB1 binds to the GDP bound form of RAN (Ran-GDP) and targets Rev to the nucleus. In the nucleus, the conversion from Ran-GDP to Ran-GTP dissociates Rev from KPNB1 and allows Rev's binding to the RRE in viral pre-mRNAs. Rev multimerization on the RRE via cooperative assembly exposes its nuclear export signal (NES) to the surface. Rev can then form a complex with XPO1/CRM1 and Ran-GTP, leading to nuclear export of the complex. Conversion from Ran-GTP to Ran-GDP mediates dissociation of the Rev/RRE/XPO1/RAN complex, so that Rev can return to the nucleus for a subsequent round of export. Beside KPNB1, also seems to interact with TNPO1/Transportin-1, RANBP5/IPO5 and IPO7/RANBP7 for nuclear import. The nucleoporin-like HRB/RIP is an essential cofactor that probably indirectly interacts with Rev to release HIV RNAs from the perinuclear region to the cytoplasm. This chain is Protein Rev, found in Homo sapiens (Human).